The following is a 448-amino-acid chain: Signal recognition particle 54 kDa protein (448 aa).

GTP contacts are provided by residues G107 to T114, D189 to R193, and T247 to D250.

The protein belongs to the GTP-binding SRP family. SRP54 subfamily. Part of the signal recognition particle protein translocation system, which is composed of SRP and FtsY. Archaeal SRP consists of a 7S RNA molecule of 300 nucleotides and two protein subunits: SRP54 and SRP19.

Its subcellular location is the cytoplasm. The enzyme catalyses GTP + H2O = GDP + phosphate + H(+). Its function is as follows. Involved in targeting and insertion of nascent membrane proteins into the cytoplasmic membrane. Binds to the hydrophobic signal sequence of the ribosome-nascent chain (RNC) as it emerges from the ribosomes. The SRP-RNC complex is then targeted to the cytoplasmic membrane where it interacts with the SRP receptor FtsY. In Thermococcus onnurineus (strain NA1), this protein is Signal recognition particle 54 kDa protein.